Reading from the N-terminus, the 135-residue chain is Large ribosomal subunit protein mL41 (135 aa).

The N-terminal 13 residues, Met1–Arg13, are a transit peptide targeting the mitochondrion.

Belongs to the mitochondrion-specific ribosomal protein mL41 family. In terms of assembly, component of the mitochondrial ribosome large subunit (39S) which comprises a 16S rRNA and about 50 distinct proteins.

It is found in the mitochondrion. Component of the mitochondrial ribosome large subunit. Also involved in apoptosis and cell cycle. In Danio rerio (Zebrafish), this protein is Large ribosomal subunit protein mL41 (mrpl41).